We begin with the raw amino-acid sequence, 324 residues long: MIRFDDFLAHADKNRLQRFIPDFERVLDERYYSRTHGDYEGWWNALQQLPTAQASQIQFDVDTLMIGAEGDLDPEEQESLIKGLRGLHPWRKGPFNFFGNHIDTEWRSDWKWTRVAPHLSPLKGRFVLDVGCGSGYHCWRMLGEGAQFVLGVDPSPKFLFQFHCVKKYAPTAPVYYLPLRSEDLPPNMDAFDTVFSMGVLYHRRSPFDHIDELKAALRPGGELVLETLIVPGDENTVLTPLDRYAQMRNVWFIGSSLATKRWLERCGFEDVRIVDEGVTSLDEQRQTDWMTFQSLKDFLDPEDFSRTVEGYPAPARAVLVARKP.

Residues Lys-92, Trp-106, Lys-111, Gly-131, 153 to 155, Met-197, Tyr-201, and Arg-316 contribute to the carboxy-S-adenosyl-L-methionine site; that span reads DPS.

It belongs to the class I-like SAM-binding methyltransferase superfamily. CmoB family. Homotetramer.

It carries out the reaction carboxy-S-adenosyl-L-methionine + 5-hydroxyuridine(34) in tRNA = 5-carboxymethoxyuridine(34) in tRNA + S-adenosyl-L-homocysteine + H(+). Catalyzes carboxymethyl transfer from carboxy-S-adenosyl-L-methionine (Cx-SAM) to 5-hydroxyuridine (ho5U) to form 5-carboxymethoxyuridine (cmo5U) at position 34 in tRNAs. The sequence is that of tRNA U34 carboxymethyltransferase from Hahella chejuensis (strain KCTC 2396).